A 223-amino-acid polypeptide reads, in one-letter code: Phosphoribosylformylglycinamidine synthase subunit PurQ (223 aa).

One can recognise a Glutamine amidotransferase type-1 domain in the interval 3-223; it reads FAVLVFPGSN…MVKSWREQNV (221 aa). C85 acts as the Nucleophile in catalysis. Active-site residues include H193 and E195.

In terms of assembly, part of the FGAM synthase complex composed of 1 PurL, 1 PurQ and 2 PurS subunits.

The protein localises to the cytoplasm. The enzyme catalyses N(2)-formyl-N(1)-(5-phospho-beta-D-ribosyl)glycinamide + L-glutamine + ATP + H2O = 2-formamido-N(1)-(5-O-phospho-beta-D-ribosyl)acetamidine + L-glutamate + ADP + phosphate + H(+). It carries out the reaction L-glutamine + H2O = L-glutamate + NH4(+). Its pathway is purine metabolism; IMP biosynthesis via de novo pathway; 5-amino-1-(5-phospho-D-ribosyl)imidazole from N(2)-formyl-N(1)-(5-phospho-D-ribosyl)glycinamide: step 1/2. In terms of biological role, part of the phosphoribosylformylglycinamidine synthase complex involved in the purines biosynthetic pathway. Catalyzes the ATP-dependent conversion of formylglycinamide ribonucleotide (FGAR) and glutamine to yield formylglycinamidine ribonucleotide (FGAM) and glutamate. The FGAM synthase complex is composed of three subunits. PurQ produces an ammonia molecule by converting glutamine to glutamate. PurL transfers the ammonia molecule to FGAR to form FGAM in an ATP-dependent manner. PurS interacts with PurQ and PurL and is thought to assist in the transfer of the ammonia molecule from PurQ to PurL. This Staphylococcus epidermidis (strain ATCC 35984 / DSM 28319 / BCRC 17069 / CCUG 31568 / BM 3577 / RP62A) protein is Phosphoribosylformylglycinamidine synthase subunit PurQ.